The primary structure comprises 244 residues: Biosynthetic peptidoglycan transglycosylase (244 aa).

Residues L25 to Y45 form a helical membrane-spanning segment.

It belongs to the glycosyltransferase 51 family.

The protein resides in the cell inner membrane. The enzyme catalyses [GlcNAc-(1-&gt;4)-Mur2Ac(oyl-L-Ala-gamma-D-Glu-L-Lys-D-Ala-D-Ala)](n)-di-trans,octa-cis-undecaprenyl diphosphate + beta-D-GlcNAc-(1-&gt;4)-Mur2Ac(oyl-L-Ala-gamma-D-Glu-L-Lys-D-Ala-D-Ala)-di-trans,octa-cis-undecaprenyl diphosphate = [GlcNAc-(1-&gt;4)-Mur2Ac(oyl-L-Ala-gamma-D-Glu-L-Lys-D-Ala-D-Ala)](n+1)-di-trans,octa-cis-undecaprenyl diphosphate + di-trans,octa-cis-undecaprenyl diphosphate + H(+). Its pathway is cell wall biogenesis; peptidoglycan biosynthesis. In terms of biological role, peptidoglycan polymerase that catalyzes glycan chain elongation from lipid-linked precursors. This chain is Biosynthetic peptidoglycan transglycosylase, found in Nitrosomonas eutropha (strain DSM 101675 / C91 / Nm57).